A 159-amino-acid polypeptide reads, in one-letter code: Probable deoxyuridine 5'-triphosphate nucleotidohydrolase (159 aa).

It belongs to the dCTP deaminase family. Archaeal dUTPase subfamily.

The enzyme catalyses dUTP + H2O = dUMP + diphosphate + H(+). The protein operates within pyrimidine metabolism; dUMP biosynthesis; dUMP from dCTP (dUTP route): step 2/2. Functionally, this enzyme is involved in nucleotide metabolism: it produces dUMP, the immediate precursor of thymidine nucleotides and it decreases the intracellular concentration of dUTP so that uracil cannot be incorporated into DNA. The polypeptide is Probable deoxyuridine 5'-triphosphate nucleotidohydrolase (Aeropyrum pernix (strain ATCC 700893 / DSM 11879 / JCM 9820 / NBRC 100138 / K1)).